The primary structure comprises 187 residues: MFLLLNCIVAVSQNMGIGKNGDLPRPPLRNEFRYFQRMTTTSSVEGKQNLVIMGRKTWFSIPEKNRPLKDRINLVLSRELKEPPQGAHFLARSLDDALKLTERPELANKVDMIWIVGGSSVYKEAMNHLGHLKLFVTRIMQDFESDTFFSEIDLEKYKLLPEYPGVLSDVQEGKHIKYKFEVCEKDD.

A DHFR domain is found at 4 to 185; the sequence is LLNCIVAVSQ…IKYKFEVCEK (182 aa). NADP(+) is bound by residues alanine 10 and 16-22; that span reads GIGKNGD. Position 31 to 36 (31 to 36) interacts with substrate; the sequence is EFRYFQ. NADP(+) is bound at residue 55-57; that stretch reads RKT. Arginine 71 lines the substrate pocket. NADP(+) contacts are provided by residues 77-79 and 117-124; these read SRE and GGSSVYKE.

This sequence belongs to the dihydrofolate reductase family. As to expression, expressed in numerous cell lines.

The protein resides in the mitochondrion. It localises to the mitochondrion matrix. The protein localises to the mitochondrion inner membrane. The catalysed reaction is (6S)-5,6,7,8-tetrahydrofolate + NADP(+) = 7,8-dihydrofolate + NADPH + H(+). The protein operates within cofactor biosynthesis; tetrahydrofolate biosynthesis; 5,6,7,8-tetrahydrofolate from 7,8-dihydrofolate: step 1/1. Its function is as follows. Key enzyme in folate metabolism. Contributes to the de novo mitochondrial thymidylate biosynthesis pathway. Required to prevent uracil accumulation in mtDNA. Binds its own mRNA and that of DHFR. This chain is Dihydrofolate reductase 2, mitochondrial, found in Homo sapiens (Human).